A 54-amino-acid polypeptide reads, in one-letter code: Small ribosomal subunit protein uS14 (54 aa).

4 residues coordinate Zn(2+): Cys-19, Cys-22, Cys-37, and Cys-40.

The protein belongs to the universal ribosomal protein uS14 family. Zinc-binding uS14 subfamily. In terms of assembly, part of the 30S ribosomal subunit. It depends on Zn(2+) as a cofactor.

Its function is as follows. Binds 16S rRNA, required for the assembly of 30S particles. This Sulfurisphaera tokodaii (strain DSM 16993 / JCM 10545 / NBRC 100140 / 7) (Sulfolobus tokodaii) protein is Small ribosomal subunit protein uS14.